Consider the following 268-residue polypeptide: Undecaprenyl-diphosphatase (268 aa).

7 helical membrane passes run 5 to 25 (TIAQALMLGVLEGFTEFIPVS), 43 to 63 (GKAFEILIQLGAILAVLSVYA), 84 to 104 (LGILIAFLPAAIIGVVAYQII), 107 to 127 (VLFETPLLICTMLILGGIVLL), 184 to 204 (AAEFSFFLAMPTMAGAFAYDL), 214 to 234 (ADLQIIGVGFIAAFVAAVLVV), and 247 to 267 (ALFGWWRIFIGVLGLIGVLVL).

The protein belongs to the UppP family.

The protein localises to the cell inner membrane. The enzyme catalyses di-trans,octa-cis-undecaprenyl diphosphate + H2O = di-trans,octa-cis-undecaprenyl phosphate + phosphate + H(+). Its function is as follows. Catalyzes the dephosphorylation of undecaprenyl diphosphate (UPP). Confers resistance to bacitracin. The protein is Undecaprenyl-diphosphatase of Chelativorans sp. (strain BNC1).